Reading from the N-terminus, the 211-residue chain is Pyrrolidone-carboxylate peptidase 1 (211 aa).

Residues E79, C142, and H164 contribute to the active site.

This sequence belongs to the peptidase C15 family. As to quaternary structure, homotetramer.

The protein localises to the cytoplasm. The enzyme catalyses Release of an N-terminal pyroglutamyl group from a polypeptide, the second amino acid generally not being Pro.. In terms of biological role, removes 5-oxoproline from various penultimate amino acid residues except L-proline. This Saccharolobus solfataricus (strain ATCC 35092 / DSM 1617 / JCM 11322 / P2) (Sulfolobus solfataricus) protein is Pyrrolidone-carboxylate peptidase 1 (pcp1).